The sequence spans 257 residues: tRNA pseudouridine synthase A (257 aa).

The active-site Nucleophile is the Asp-53. Substrate is bound at residue Tyr-111.

It belongs to the tRNA pseudouridine synthase TruA family. Homodimer.

It carries out the reaction uridine(38/39/40) in tRNA = pseudouridine(38/39/40) in tRNA. Formation of pseudouridine at positions 38, 39 and 40 in the anticodon stem and loop of transfer RNAs. The chain is tRNA pseudouridine synthase A from Xanthomonas campestris pv. campestris (strain 8004).